Reading from the N-terminus, the 370-residue chain is Galanin receptor type 3 (370 aa).

The Extracellular portion of the chain corresponds to 1 to 20; sequence MADIQNISLDSPGSVGAVAV. A glycan (N-linked (GlcNAc...) asparagine) is linked at Asn6. A helical membrane pass occupies residues 21 to 41; that stretch reads PVVFALIFLLGMVGNGLVLAV. Topologically, residues 42–57 are cytoplasmic; sequence LLQPGPSAWQEPGSTT. The helical transmembrane segment at 58-78 threads the bilayer; it reads DLFILNLAVADLCFILCCVPF. Residues 79–96 lie on the Extracellular side of the membrane; sequence QAAIYTLDAWLFGAFVCK. Residues Cys95 and Cys172 are joined by a disulfide bond. A helical membrane pass occupies residues 97–118; that stretch reads TVHLLIYLTMYASSFTLAAVSV. Over 119–138 the chain is Cytoplasmic; sequence DRYLAVRHPLRSRALRTPRN. The helical transmembrane segment at 139-159 threads the bilayer; the sequence is ARAAVGLVWLLAALFSAPYLS. Residues 160–184 lie on the Extracellular side of the membrane; sequence YYGTVRYGALELCVPAWEDARRRAL. The chain crosses the membrane as a helical span at residues 185-205; that stretch reads DVATFAAGYLLPVTVVSLAYG. Over 206-236 the chain is Cytoplasmic; the sequence is RTLCFLWAAVGPAGAAAAEARRRATGRAGRA. A helical transmembrane segment spans residues 237–257; that stretch reads MLTVAALYALCWGPHHALILC. The Extracellular segment spans residues 258–259; it reads FW. Residues 260 to 280 traverse the membrane as a helical segment; that stretch reads YGRFAFSPATYACRLASHCLA. Topologically, residues 281–370 are cytoplasmic; it reads YANSCLNPLV…RLTLSARGPQ (90 aa). Cys308 carries the S-palmitoyl cysteine lipid modification. The disordered stretch occupies residues 328–370; sequence QPASSGPAGYPGDARPRGWSMEPRGDALRGGETRLTLSARGPQ. Residues 350-359 show a composition bias toward basic and acidic residues; that stretch reads PRGDALRGGE.

Belongs to the G-protein coupled receptor 1 family.

The protein resides in the cell membrane. Its function is as follows. Receptor for the hormone galanin and spexin-1. In Mus musculus (Mouse), this protein is Galanin receptor type 3 (Galr3).